The following is a 119-amino-acid chain: Phosphoribosyl-AMP cyclohydrolase (119 aa).

Residue aspartate 77 participates in Mg(2+) binding. Cysteine 78 lines the Zn(2+) pocket. The Mg(2+) site is built by aspartate 79 and aspartate 81. Zn(2+) contacts are provided by cysteine 94 and cysteine 101.

Belongs to the PRA-CH family. Homodimer. Requires Mg(2+) as cofactor. The cofactor is Zn(2+).

It localises to the cytoplasm. The catalysed reaction is 1-(5-phospho-beta-D-ribosyl)-5'-AMP + H2O = 1-(5-phospho-beta-D-ribosyl)-5-[(5-phospho-beta-D-ribosylamino)methylideneamino]imidazole-4-carboxamide. Its pathway is amino-acid biosynthesis; L-histidine biosynthesis; L-histidine from 5-phospho-alpha-D-ribose 1-diphosphate: step 3/9. In terms of biological role, catalyzes the hydrolysis of the adenine ring of phosphoribosyl-AMP. The sequence is that of Phosphoribosyl-AMP cyclohydrolase from Cereibacter sphaeroides (strain ATCC 17025 / ATH 2.4.3) (Rhodobacter sphaeroides).